The chain runs to 331 residues: 3-dehydroquinate synthase homolog (331 aa).

Belongs to the archaeal-type DHQ synthase family.

This Aquifex aeolicus (strain VF5) protein is 3-dehydroquinate synthase homolog.